The chain runs to 442 residues: Histidinol dehydrogenase (442 aa).

NAD(+) contacts are provided by Tyr132, Gln194, and Asn217. Substrate is bound by residues Ser243, Gln265, and His268. Gln265 and His268 together coordinate Zn(2+). Catalysis depends on proton acceptor residues Glu332 and His333. Residues His333, Asp366, Glu420, and His425 each contribute to the substrate site. A Zn(2+)-binding site is contributed by Asp366. Residue His425 coordinates Zn(2+).

This sequence belongs to the histidinol dehydrogenase family. Zn(2+) is required as a cofactor.

It carries out the reaction L-histidinol + 2 NAD(+) + H2O = L-histidine + 2 NADH + 3 H(+). The protein operates within amino-acid biosynthesis; L-histidine biosynthesis; L-histidine from 5-phospho-alpha-D-ribose 1-diphosphate: step 9/9. In terms of biological role, catalyzes the sequential NAD-dependent oxidations of L-histidinol to L-histidinaldehyde and then to L-histidine. This chain is Histidinol dehydrogenase, found in Idiomarina loihiensis (strain ATCC BAA-735 / DSM 15497 / L2-TR).